The following is a 598-amino-acid chain: F-box/WD repeat-containing protein 8 (598 aa).

Met-1 carries the N-acetylmethionine modification. The segment at 17-93 (LAQAQAPKKR…RSPLAREGAG (77 aa)) is disordered. Positions 29 to 40 (PEAAERRARRPE) are enriched in basic and acidic residues. The segment covering 61–71 (EGAGRPPAARA) has biased composition (low complexity). Phosphoserine occurs at positions 83 and 85. An F-box domain is found at 113 to 159 (PFFDIQLPYELAINIFQYLDRKELGRCAQVSKTWKVIAEDEVLWYRL). WD repeat units lie at residues 201 to 250 (AVSE…LESE), 259 to 299 (QPNV…FEHD), 300 to 340 (ARIQ…AEFE), 341 to 383 (VPKL…LLYA), 384 to 429 (HGPP…LKLG), 430 to 475 (NVLR…SAHQ), 476 to 513 (LRVS…EVYS), and 514 to 561 (GHPV…AYEF).

In terms of assembly, component of the Cul7-RING(FBXW8) complex consisting of CUL7, RBX1, SKP1 and FBXW8; within the complex interacts with CUL7 and SKP1. Interacts with GLMN isoform 1. Interacts with OBSL1, CUL1, CUL2, CCT6B, PFDN5, CCT2, CCT3, CCT6A, CCT7, VBP1, CCDC8, ARF1, TRIP13, PDCD5 and GORASP1. Interacts with MAP4K1/HPK1 (when autophosphorylated). Associated component of the 3M complex. Interacts with POUF51 (when phosphorylated on 'Ser-355'). Phosphorylation at Ser-85 by mTORC2 promotes FBXW8 stabilization, allowing its translocation to the cytosol in response to insulin.

Its subcellular location is the cytoplasm. It localises to the perinuclear region. The protein localises to the golgi apparatus. The protein operates within protein modification; protein ubiquitination. Substrate-recognition component of the Cul7-RING(FBXW8) ubiquitin ligase complex, which mediates the ubiquitination and subsequent proteasomal degradation of target proteins. The Cul7-RING(FBXW8) complex mediates ubiquitination and consequent degradation of GORASP1, acting as a component of the ubiquitin ligase pathway that regulates Golgi morphogenesis and dendrite patterning in brain. Mediates ubiquitination and degradation of IRS1 in a mTOR-dependent manner: the Cul7-RING(FBXW8) complex recognizes and binds IRS1 previously phosphorylated by S6 kinase (RPS6KB1 or RPS6KB2). The Cul7-RING(FBXW8) complex also mediates ubiquitination of MAP4K1/HPK1: recognizes and binds autophosphorylated MAP4K1/HPK1, leading to its degradation, thereby affecting cell proliferation and differentiation. The Cul7-RING(FBXW8) complex also mediates ubiquitination of phosphorylated cyclin-D1 (CCND1). The Cul7-RING(FBXW8) complex is however not a major regulator of CCND1 stability during the G1/S transition. Associated component of the 3M complex, suggesting that it mediates some of 3M complex functions. The sequence is that of F-box/WD repeat-containing protein 8 from Homo sapiens (Human).